The chain runs to 540 residues: L-aspartate oxidase (540 aa).

FAD-binding positions include Ser16–Ala19, Lys38, Ser45–Gly52, and Asp223. The active-site Proton donor/acceptor is Arg290. FAD is bound by residues Glu375 and Ser391 to Leu392.

This sequence belongs to the FAD-dependent oxidoreductase 2 family. NadB subfamily. Requires FAD as cofactor.

The protein resides in the cytoplasm. It catalyses the reaction L-aspartate + O2 = iminosuccinate + H2O2. It carries out the reaction fumarate + L-aspartate = iminosuccinate + succinate. Its pathway is cofactor biosynthesis; NAD(+) biosynthesis; iminoaspartate from L-aspartate (oxidase route): step 1/1. Catalyzes the oxidation of L-aspartate to iminoaspartate, the first step in the de novo biosynthesis of NAD(+). Can use either oxygen or fumarate as electron acceptors, which allows the enzyme to be functional under aerobic and anaerobic conditions. This Escherichia coli O157:H7 protein is L-aspartate oxidase (nadB).